An 874-amino-acid chain; its full sequence is Cellulose synthase catalytic subunit [UDP-forming] (874 aa).

The next 4 membrane-spanning stretches (helical) occupy residues Ser30–Leu50, Ile151–Phe171, Pro173–Met193, and Leu230–Gly250. The tract at residues Gln271–Val364 is catalytic subdomain A. The active site involves Asp313. Substrate contacts are provided by Asp360 and Asp362. The tract at residues Lys441–Met501 is catalytic subdomain B. Residue Asp457 is part of the active site. Transmembrane regions (helical) follow at residues Leu525–Leu545, Phe547–Ile567, Ile592–Pro612, Val634–Val654, and Val668–Val688. In terms of domain architecture, PilZ spans Gln694–Phe790. Residues Ser833 to Pro853 traverse the membrane as a helical segment.

It belongs to the glycosyltransferase 2 family. The cofactor is Mg(2+).

The protein localises to the cell inner membrane. It carries out the reaction [(1-&gt;4)-beta-D-glucosyl](n) + UDP-alpha-D-glucose = [(1-&gt;4)-beta-D-glucosyl](n+1) + UDP + H(+). Its pathway is glycan metabolism; bacterial cellulose biosynthesis. Its activity is regulated as follows. Activated by bis-(3'-5') cyclic diguanylic acid (c-di-GMP). Its function is as follows. Catalytic subunit of cellulose synthase. It polymerizes uridine 5'-diphosphate glucose to cellulose, which is produced as an extracellular component for mechanical and chemical protection at the onset of the stationary phase, when the cells exhibit multicellular behavior (rdar morphotype). Coexpression of cellulose and thin aggregative fimbriae leads to a hydrophobic network with tightly packed cells embedded in a highly inert matrix. The chain is Cellulose synthase catalytic subunit [UDP-forming] (bcsA) from Salmonella typhi.